A 28-amino-acid chain; its full sequence is Alpha-(1-6)-linked fucose-specific lectin (28 aa).

Homohexamer. As to expression, expressed by mycelium-forming spores.

The protein localises to the secreted. Alpha-(1-6)-linked L-fucose specific lectin. The protein is Alpha-(1-6)-linked fucose-specific lectin of Rhizopus stolonifer (Rhizopus nigricans).